We begin with the raw amino-acid sequence, 302 residues long: Methionyl-tRNA formyltransferase (302 aa).

Position 106-109 (106-109 (SVLP)) interacts with (6S)-5,6,7,8-tetrahydrofolate.

The protein belongs to the Fmt family.

It carries out the reaction L-methionyl-tRNA(fMet) + (6R)-10-formyltetrahydrofolate = N-formyl-L-methionyl-tRNA(fMet) + (6S)-5,6,7,8-tetrahydrofolate + H(+). In terms of biological role, attaches a formyl group to the free amino group of methionyl-tRNA(fMet). The formyl group appears to play a dual role in the initiator identity of N-formylmethionyl-tRNA by promoting its recognition by IF2 and preventing the misappropriation of this tRNA by the elongation apparatus. This chain is Methionyl-tRNA formyltransferase, found in Hydrogenobaculum sp. (strain Y04AAS1).